The chain runs to 142 residues: Large ribosomal subunit protein uL13 (142 aa).

This sequence belongs to the universal ribosomal protein uL13 family. As to quaternary structure, part of the 50S ribosomal subunit.

Its function is as follows. This protein is one of the early assembly proteins of the 50S ribosomal subunit, although it is not seen to bind rRNA by itself. It is important during the early stages of 50S assembly. The protein is Large ribosomal subunit protein uL13 of Aliivibrio salmonicida (strain LFI1238) (Vibrio salmonicida (strain LFI1238)).